The sequence spans 673 residues: MARENAFYITTPIYYPSGKLHIGNAYTTIACDVMARYKRMRGFDVFYLTGSDEHGQKIEQKAKEMNISPKAYVDDMAEGMKKLWNTLEISNDKFIRTTEEQHKKVVADIFERFLEQGDIYLDEYEGWYSVPDETFYTETQLEDVERDDDGNVIGGKSPDSGHPVELIKEESYFFRMSKYADRLLKFYEDNPEFIQPESRKNEMINNFIKPGLEDLAVSRTTFSWGVQVPSNPKHVVYVWIDALTNYITALGYGSEDTSLYDKFWPADVHMVGKEIVRFHTIYWPIMLMALDLPLPKKVFAHGWLLMKDGKMSKSKGNVVYPEMLVERYGLDALRYYLMREVAFGSDGVFTPEDFISRVNYDLANDLGNLLNRTVAMINKYFDGKVPEFKGEVTSFDGELQTTANNAVKEYEKHMEGMQFSDALKQVWILISRANKYIDETEPWIVAKDEGRRNELASVMVHLAESLHAAALMLQPFLTHAPKKIAEQLGLGEEYGLDWGTIGFGNFPENTTVVKKGTPIFPRLDLDEEAAYIRDQMANGANAASSEDETGDWDPNETDLVSEKEKQIKYDVFDKVELKVAEVKDCSKVEGADKLLKFRLDAGDNGDRQILSGIAEYYSEPEQLIGKKVVIVANLKPRKMRGEISQGMILSAEYDGKLQIVEAPSEAPNGSSIS.

A 'HIGH' region motif is present at residues Tyr-14 to Asn-24. The short motif at Lys-310 to Ser-314 is the 'KMSKS' region element. Position 313 (Lys-313) interacts with ATP. Residues Val-571–Ser-673 form the tRNA-binding domain.

Belongs to the class-I aminoacyl-tRNA synthetase family. MetG type 2B subfamily. Homodimer.

Its subcellular location is the cytoplasm. It carries out the reaction tRNA(Met) + L-methionine + ATP = L-methionyl-tRNA(Met) + AMP + diphosphate. Its function is as follows. Is required not only for elongation of protein synthesis but also for the initiation of all mRNA translation through initiator tRNA(fMet) aminoacylation. The polypeptide is Methionine--tRNA ligase (metG) (Oceanobacillus iheyensis (strain DSM 14371 / CIP 107618 / JCM 11309 / KCTC 3954 / HTE831)).